The primary structure comprises 386 residues: DNA methyltransferase CcrM (386 aa).

Residues 280 to 382 (LGKAELTVMT…LRKIIREQMA (103 aa)) enclose the RAMA domain.

Belongs to the N(4)/N(6)-methyltransferase family.

It carries out the reaction a 2'-deoxyadenosine in DNA + S-adenosyl-L-methionine = an N(6)-methyl-2'-deoxyadenosine in DNA + S-adenosyl-L-homocysteine + H(+). A beta subtype methylase that recognizes the double-stranded sequence 5'-GANTC-3' and methylates A-2 on both strands. CcrM-mediated methylation has important cellular functions. Contributes to the accurate cell-cycle control of DNA replication and cellular morphology. This chain is DNA methyltransferase CcrM (ccrM), found in Brucella abortus (strain S19).